The following is a 506-amino-acid chain: Lysine--tRNA ligase (506 aa).

Positions 416 and 423 each coordinate Mg(2+).

Belongs to the class-II aminoacyl-tRNA synthetase family. In terms of assembly, homodimer. Mg(2+) serves as cofactor.

Its subcellular location is the cytoplasm. It carries out the reaction tRNA(Lys) + L-lysine + ATP = L-lysyl-tRNA(Lys) + AMP + diphosphate. This is Lysine--tRNA ligase from Sodalis glossinidius (strain morsitans).